The chain runs to 318 residues: Trans-prenyltransferase (318 aa).

A helical membrane pass occupies residues 1–21; it reads MLHLIYISIIVVLIIILISYT. Lysine 85, arginine 88, and histidine 122 together coordinate isopentenyl diphosphate. 2 residues coordinate Mg(2+): aspartate 129 and aspartate 135. Arginine 140 is a dimethylallyl diphosphate binding site. Arginine 141 provides a ligand contact to isopentenyl diphosphate. Dimethylallyl diphosphate is bound by residues lysine 216, threonine 217, and glutamine 254.

This sequence belongs to the FPP/GGPP synthase family. Asfivirus trans-prenyltransferase subfamily. Requires Mg(2+) as cofactor.

The protein localises to the host endoplasmic reticulum. It localises to the host membrane. The catalysed reaction is isopentenyl diphosphate + dimethylallyl diphosphate = (2E)-geranyl diphosphate + diphosphate. It carries out the reaction isopentenyl diphosphate + (2E)-geranyl diphosphate = (2E,6E)-farnesyl diphosphate + diphosphate. The enzyme catalyses isopentenyl diphosphate + (2E,6E)-farnesyl diphosphate = (2E,6E,10E)-geranylgeranyl diphosphate + diphosphate. It catalyses the reaction isopentenyl diphosphate + (2E,6E,10E)-geranylgeranyl diphosphate = (2E,6E,10E,14E)-geranylfarnesyl diphosphate + diphosphate. It functions in the pathway isoprenoid biosynthesis; farnesyl diphosphate biosynthesis; farnesyl diphosphate from geranyl diphosphate and isopentenyl diphosphate: step 1/1. Its pathway is isoprenoid biosynthesis; geranyl diphosphate biosynthesis; geranyl diphosphate from dimethylallyl diphosphate and isopentenyl diphosphate: step 1/1. The protein operates within isoprenoid biosynthesis; geranylgeranyl diphosphate biosynthesis; geranylgeranyl diphosphate from farnesyl diphosphate and isopentenyl diphosphate: step 1/1. Functionally, trans-prenyltransferase that catalyzes the sequential condensation of isopentenyl diphosphate (IPP) with different allylic diphosphates, such as dimethylallyl diphosphate (DMAPP), geranyl diphosphate (GPP), farnesyl diphosphate (FPP) and geranylgeranyl diphosphate (GGPP), farnesyl diphosphate being the best allylic substrate. This chain is Trans-prenyltransferase, found in African swine fever virus (isolate Tick/South Africa/Pretoriuskop Pr4/1996) (ASFV).